A 559-amino-acid polypeptide reads, in one-letter code: MAAQGFLLLASYLLVLLVLARPLGMCLARMVNDIPLPGLAGVERVLWRVAGIRAEEMGWLQYLLAILLFNALGGLALFALLMLQGVLPFNPQHLPGLSWDLALNTAISFISNTNWQAYAGESTMSYLSQMVGLTVQNFLSAATGIAVVFALTRAFARQKMSTLGNAWVDLTRITLWLLLPLSLLVALFFIQQGVPQNLQAYQPFITLEGVHQLLPMGPVASQEAIKLLGTNGGGFFNANSAHPFENPTALTNLVQMLAIFLIPTALCFAFGEVVSDRRQGRAILWAMTLIFILCVAVVMWAETRGNPHLLTLGADSSLNMEGKESRFGILASSLFAVITTAASCGAVNAMHDSFTALGGMVPMWLMQIGEVVFGGVGSGLYGMLLFVMLAVFIAGLMVGRTPEYLGKKIDVREMKMIALAILVTPTLVLLGTALAMMTDAGRAGMFNPGPHGFSEVLYAVTSAANNNGSAFAGLGAATPFWNLLLAFCMLVGRFAVIIPVMAIAGSLVAKKIQPASPGTLATHDALFIGLLIGTVLLVGALTFIPALALGPLAEHFSLL.

The next 12 helical transmembrane spans lie at Gly-5–Met-25, Leu-63–Leu-83, Val-131–Leu-151, Ile-173–Gly-193, Val-254–Val-274, Ala-282–Glu-302, Phe-327–Val-347, Ala-356–Val-376, Gly-379–Gly-399, Met-416–Met-436, Leu-483–Ile-503, and Ala-525–Pro-545.

This sequence belongs to the KdpA family. The system is composed of three essential subunits: KdpA, KdpB and KdpC.

Its subcellular location is the cell inner membrane. Functionally, part of the high-affinity ATP-driven potassium transport (or Kdp) system, which catalyzes the hydrolysis of ATP coupled with the electrogenic transport of potassium into the cytoplasm. This subunit binds the periplasmic potassium ions and delivers the ions to the membrane domain of KdpB through an intramembrane tunnel. The chain is Potassium-transporting ATPase potassium-binding subunit from Klebsiella pneumoniae subsp. pneumoniae (strain ATCC 700721 / MGH 78578).